A 182-amino-acid polypeptide reads, in one-letter code: Dual-action ribosomal maturation protein DarP (182 aa).

It belongs to the DarP family.

It localises to the cytoplasm. In terms of biological role, member of a network of 50S ribosomal subunit biogenesis factors which assembles along the 30S-50S interface, preventing incorrect 23S rRNA structures from forming. Promotes peptidyl transferase center (PTC) maturation. The polypeptide is Dual-action ribosomal maturation protein DarP (Yersinia pestis).